The primary structure comprises 100 residues: ATP-dependent Clp protease adapter protein ClpS (100 aa).

It belongs to the ClpS family. Binds to the N-terminal domain of the chaperone ClpA.

Functionally, involved in the modulation of the specificity of the ClpAP-mediated ATP-dependent protein degradation. This is ATP-dependent Clp protease adapter protein ClpS from Corynebacterium glutamicum (strain R).